The following is a 154-amino-acid chain: C-type lectin 16 (154 aa).

A signal peptide spans 1–20 (MALSLYLIAVICSLVGFTAS). Positions 27-152 (DNRFCFPNVV…CASMRRFVCE (126 aa)) constitute a C-type lectin domain. Intrachain disulfides connect Cys-46/Cys-151 and Cys-123/Cys-143.

(Microbial infection) Interacts with non-structural protein 1 of dengue virus type 2. Interacts with envelope protein E of dengue virus type 2. In terms of tissue distribution, female salivary gland (at protein level). Not detected in female carcass without salivary glands (at protein level). Not detected in male tissues (at protein level).

It is found in the secreted. Functionally, putative lectin. May have a regulatory role in mosquito immunity. Probably suppresses replication of dengue virus type 2 in mosquito salivary glands. This Aedes aegypti (Yellowfever mosquito) protein is C-type lectin 16.